A 519-amino-acid chain; its full sequence is Phosphate acetyltransferase (519 aa).

A phosphate acetyltransferase region spans residues 196-519; it reads AFQRSLEKKA…LISAIQAQDY (324 aa).

It in the N-terminal section; belongs to the CobB/CobQ family. The protein in the C-terminal section; belongs to the phosphate acetyltransferase and butyryltransferase family.

The protein localises to the cytoplasm. The catalysed reaction is acetyl-CoA + phosphate = acetyl phosphate + CoA. It participates in metabolic intermediate biosynthesis; acetyl-CoA biosynthesis; acetyl-CoA from acetate: step 2/2. In Helicobacter pylori (strain J99 / ATCC 700824) (Campylobacter pylori J99), this protein is Phosphate acetyltransferase (pta).